We begin with the raw amino-acid sequence, 370 residues long: Actin-related protein 2/3 complex subunit 1A-A (370 aa).

6 WD repeats span residues 6–45 (FLLE…WVKG), 50–89 (EHNG…WKPT), 140–179 (PIRS…VDEK), 202–241 (SSGG…SVSQ), 244–284 (TEFL…TFVS), and 322–365 (LHQN…SYIQ).

Belongs to the WD repeat ARPC1 family. Component of the Arp2/3 complex.

The protein resides in the cytoplasm. The protein localises to the cytoskeleton. It localises to the nucleus. Functionally, probably functions as a component of the Arp2/3 complex which is involved in regulation of actin polymerization and together with an activating nucleation-promoting factor (NPF) mediates the formation of branched actin networks. In addition to its role in the cytoplasmic cytoskeleton, the Arp2/3 complex also promotes actin polymerization in the nucleus, thereby regulating gene transcription and repair of damaged DNA. The chain is Actin-related protein 2/3 complex subunit 1A-A (arpc1a-a) from Xenopus laevis (African clawed frog).